A 198-amino-acid chain; its full sequence is Recombination protein RecR (198 aa).

The C4-type zinc finger occupies 58–73 (CSTCGNFTDTDPCALC). Residues 81–175 (STICVVEQPK…KVTRIAAGIP (95 aa)) enclose the Toprim domain.

Belongs to the RecR family.

May play a role in DNA repair. It seems to be involved in an RecBC-independent recombinational process of DNA repair. It may act with RecF and RecO. The protein is Recombination protein RecR of Clostridium botulinum (strain Alaska E43 / Type E3).